Reading from the N-terminus, the 320-residue chain is Small ribosomal subunit protein uS15m (320 aa).

Disordered stretches follow at residues 37–60 (NISQ…AQQR) and 214–242 (QSLE…DTGS).

It belongs to the universal ribosomal protein uS15 family. As to quaternary structure, component of the mitochondrial small ribosomal subunit (mt-SSU). Mature N.crassa 74S mitochondrial ribosomes consist of a small (37S) and a large (54S) subunit. The 37S small subunit contains a 16S ribosomal RNA (16S mt-rRNA) and 32 different proteins. The 54S large subunit contains a 23S rRNA (23S mt-rRNA) and 42 different proteins.

It is found in the mitochondrion. Component of the mitochondrial ribosome (mitoribosome), a dedicated translation machinery responsible for the synthesis of mitochondrial genome-encoded proteins, including at least some of the essential transmembrane subunits of the mitochondrial respiratory chain. The mitoribosomes are attached to the mitochondrial inner membrane and translation products are cotranslationally integrated into the membrane. This Neurospora crassa (strain ATCC 24698 / 74-OR23-1A / CBS 708.71 / DSM 1257 / FGSC 987) protein is Small ribosomal subunit protein uS15m (mrps28).